A 231-amino-acid chain; its full sequence is 7-cyano-7-deazaguanine synthase (231 aa).

Phe8–Leu18 contacts ATP. Zn(2+) is bound by residues Cys188, Cys197, Cys200, and Cys203.

This sequence belongs to the QueC family. Zn(2+) serves as cofactor.

It catalyses the reaction 7-carboxy-7-deazaguanine + NH4(+) + ATP = 7-cyano-7-deazaguanine + ADP + phosphate + H2O + H(+). Its pathway is purine metabolism; 7-cyano-7-deazaguanine biosynthesis. Its function is as follows. Catalyzes the ATP-dependent conversion of 7-carboxy-7-deazaguanine (CDG) to 7-cyano-7-deazaguanine (preQ(0)). The chain is 7-cyano-7-deazaguanine synthase from Erwinia tasmaniensis (strain DSM 17950 / CFBP 7177 / CIP 109463 / NCPPB 4357 / Et1/99).